The following is a 257-amino-acid chain: Enterotoxin type E (257 aa).

Positions 1 to 27 (MKKTAFILLLFIALTLTTSPLVNGSEK) are cleaved as a signal peptide. A disulfide bond links cysteine 120 and cysteine 130. Zn(2+) contacts are provided by histidine 211, histidine 249, and aspartate 251.

The protein belongs to the staphylococcal/streptococcal toxin family. Interacts with host MHC class II molecules composed of alpha/HLA-DRA and beta/HLA-DRB1 chains. Interacts with host T-cell receptor beta variable TRBV7-9. Zn(2+) is required as a cofactor.

The protein localises to the secreted. Functionally, staphylococcal enterotoxin that activates the host immune system by binding as unprocessed molecules to major histocompatibility (MHC) complex class II and T-cell receptor (TCR) molecules. In turn, this ternary complex activates a large number of T-lymphocytes initiating a systemic release of pro-inflammatory cytokines. Also causes the intoxication staphylococcal food poisoning syndrome. The sequence is that of Enterotoxin type E (entE) from Staphylococcus aureus.